A 334-amino-acid chain; its full sequence is Holliday junction branch migration complex subunit RuvB (334 aa).

Positions 4-186 are large ATPase domain (RuvB-L); sequence ADRLIAPISN…FGIVQRLEYY (183 aa). ATP-binding positions include Ile25, Arg26, Gly67, Lys70, Thr71, Thr72, 133–135, Arg176, Tyr186, and Arg223; that span reads EDY. Thr71 contacts Mg(2+). Residues 187–257 are small ATPAse domain (RuvB-S); the sequence is KVADLQHIVQ…TADRALNMLD (71 aa). The interval 260-334 is head domain (RuvB-H); that stretch reads HQGFDYMDRK…RAYLHFGIEK (75 aa). DNA-binding residues include Arg315 and Arg320.

It belongs to the RuvB family. Homohexamer. Forms an RuvA(8)-RuvB(12)-Holliday junction (HJ) complex. HJ DNA is sandwiched between 2 RuvA tetramers; dsDNA enters through RuvA and exits via RuvB. An RuvB hexamer assembles on each DNA strand where it exits the tetramer. Each RuvB hexamer is contacted by two RuvA subunits (via domain III) on 2 adjacent RuvB subunits; this complex drives branch migration. In the full resolvosome a probable DNA-RuvA(4)-RuvB(12)-RuvC(2) complex forms which resolves the HJ.

The protein resides in the cytoplasm. The catalysed reaction is ATP + H2O = ADP + phosphate + H(+). Functionally, the RuvA-RuvB-RuvC complex processes Holliday junction (HJ) DNA during genetic recombination and DNA repair, while the RuvA-RuvB complex plays an important role in the rescue of blocked DNA replication forks via replication fork reversal (RFR). RuvA specifically binds to HJ cruciform DNA, conferring on it an open structure. The RuvB hexamer acts as an ATP-dependent pump, pulling dsDNA into and through the RuvAB complex. RuvB forms 2 homohexamers on either side of HJ DNA bound by 1 or 2 RuvA tetramers; 4 subunits per hexamer contact DNA at a time. Coordinated motions by a converter formed by DNA-disengaged RuvB subunits stimulates ATP hydrolysis and nucleotide exchange. Immobilization of the converter enables RuvB to convert the ATP-contained energy into a lever motion, pulling 2 nucleotides of DNA out of the RuvA tetramer per ATP hydrolyzed, thus driving DNA branch migration. The RuvB motors rotate together with the DNA substrate, which together with the progressing nucleotide cycle form the mechanistic basis for DNA recombination by continuous HJ branch migration. Branch migration allows RuvC to scan DNA until it finds its consensus sequence, where it cleaves and resolves cruciform DNA. The sequence is that of Holliday junction branch migration complex subunit RuvB from Vibrio cholerae serotype O1 (strain ATCC 39541 / Classical Ogawa 395 / O395).